We begin with the raw amino-acid sequence, 319 residues long: Phospho-N-acetylmuramoyl-pentapeptide-transferase (319 aa).

9 helical membrane passes run 5 to 25, 51 to 71, 79 to 99, 119 to 139, 149 to 169, 173 to 193, 197 to 217, 224 to 246, and 299 to 319; these read LIAF…LIIW, TMGG…ICAY, VWIL…DDGL, LLVA…FALY, VVLF…AVNL, LDGL…WLAF, NFGV…FFMF, IFMG…IFLG, and VDLV…MIWG.

This sequence belongs to the glycosyltransferase 4 family. MraY subfamily. It depends on Mg(2+) as a cofactor.

The protein resides in the cell membrane. It catalyses the reaction UDP-N-acetyl-alpha-D-muramoyl-L-alanyl-gamma-D-glutamyl-L-lysyl-D-alanyl-D-alanine + di-trans,octa-cis-undecaprenyl phosphate = Mur2Ac(oyl-L-Ala-gamma-D-Glu-L-Lys-D-Ala-D-Ala)-di-trans,octa-cis-undecaprenyl diphosphate + UMP. The protein operates within cell wall biogenesis; peptidoglycan biosynthesis. Functionally, catalyzes the initial step of the lipid cycle reactions in the biosynthesis of the cell wall peptidoglycan: transfers peptidoglycan precursor phospho-MurNAc-pentapeptide from UDP-MurNAc-pentapeptide onto the lipid carrier undecaprenyl phosphate, yielding undecaprenyl-pyrophosphoryl-MurNAc-pentapeptide, known as lipid I. The chain is Phospho-N-acetylmuramoyl-pentapeptide-transferase from Lactobacillus delbrueckii subsp. bulgaricus (strain ATCC BAA-365 / Lb-18).